We begin with the raw amino-acid sequence, 255 residues long: Electron transfer flavoprotein subunit beta (255 aa).

At Ala2 the chain carries N-acetylalanine. AMP is bound by residues Ala9, 39–42 (NPFC), Cys66, and 123–134 (GKQAIDDDCNQT). Residues 183–205 (ADLRLNEPRYATLPNIMKAKKKK) are recognition loop. Lys200 carries the N6,N6,N6-trimethyllysine; by ETFBKMT; alternate modification. Position 200 is an N6-acetyllysine; alternate (Lys200). N6-methyllysine; alternate is present on Lys200. The residue at position 203 (Lys203) is an N6,N6,N6-trimethyllysine; by ETFBKMT. An N6-acetyllysine; alternate modification is found at Lys210. Position 210 is an N6-succinyllysine; alternate (Lys210). Phosphoserine occurs at positions 223 and 226. At Lys238 the chain carries N6-acetyllysine. Position 248 is an N6-acetyllysine; alternate (Lys248). At Lys248 the chain carries N6-succinyllysine; alternate.

It belongs to the ETF beta-subunit/FixA family. Heterodimer composed of ETFA and ETFB. Identified in a complex that contains ETFA, ETFB and ETFRF1. Interacts with ACADM. In terms of processing, methylated. Trimethylation at Lys-200 and Lys-203 may negatively regulate the activity in electron transfer from acyl-CoA dehydrogenases.

It localises to the mitochondrion matrix. Its function is as follows. Heterodimeric electron transfer flavoprotein that accepts electrons from several mitochondrial dehydrogenases, including acyl-CoA dehydrogenases, glutaryl-CoA and sarcosine dehydrogenase. It transfers the electrons to the main mitochondrial respiratory chain via ETF-ubiquinone oxidoreductase. Required for normal mitochondrial fatty acid oxidation and normal amino acid metabolism. ETFB binds an AMP molecule that probably has a purely structural role. The polypeptide is Electron transfer flavoprotein subunit beta (Mus musculus (Mouse)).